Reading from the N-terminus, the 300-residue chain is Tegument protein VP22 (300 aa).

Residues 1-148 (MTSRRSVKSC…PARGRRPAQA (148 aa)) form a disordered region. Composition is skewed to basic and acidic residues over residues 10–22 (CPREAPRGTHEEL) and 50–61 (PRGEVRFLHYDE). The short motif at 163–166 (GRTK) is the Nuclear localization signal element. Positions 174 to 267 (KKLHFSTAPP…LVNPDAAQDV (94 aa)) are interaction with gE. Positions 232–244 (LNELLDLTTIRVT) match the Nuclear export signal motif. Residues 269 to 292 (ATAAARGRPAGRAAATARAPARSA) show a composition bias toward low complexity. The segment at 269-300 (ATAAARGRPAGRAAATARAPARSASRPRRPLE) is disordered.

The protein belongs to the alphaherpesvirinae VP22 tegument protein family. In terms of assembly, interacts with gE (via C-terminus); this interaction is necessary for the recruitment of VP22 to the Golgi and its packaging into virions. Interacts with gM (via C-terminus). Interacts with VP16; this interaction allows the formation of a tripartite complex composed of VP16, VP22 and UL41/VHS. Interacts with the capsid-binding protein UL16. Interacts with host CGAS. Post-translationally, highly phosphorylated in the host cell. Packaging is selective for underphosphorylated forms.

It localises to the virion tegument. Its subcellular location is the host cytoplasm. The protein resides in the host nucleus. It is found in the host Golgi apparatus. Functionally, tegument protein that plays different roles during the time course of infection. Participates in both the accumulation of viral mRNAs and viral protein translation at late time of infection. Modulates the RNase activity of the virion host shutoff protein UL41 probably to ensure necessary levels of key cellular mRNAs and proteins. Plays a role in microtubule reorganization that occurs after viral infection by stabilizing microtubule network. Plays a role in the inhibition of host innate immune system by targeting the CGAS enzymatic activity which is the principal cytosolic DNA sensor that detects invading viral DNA. Acts by mediating disruption of liquid-like droplets in which CGAS is activated, thereby preventing CGAS activity. The chain is Tegument protein VP22 from Homo sapiens (Human).